We begin with the raw amino-acid sequence, 796 residues long: ER degradation-enhancing alpha-mannosidase-like protein 1 (796 aa).

The first 20 residues, 1 to 20 (MVCCLWVLLALLLHLDHVAC), serve as a signal peptide directing secretion. The N-linked (GlcNAc...) asparagine glycan is linked to Asn86. Catalysis depends on Glu372, which acts as the Proton donor. A Ca(2+)-binding site is contributed by Thr495. 3 N-linked (GlcNAc...) asparagine glycosylation sites follow: Asn517, Asn672, and Asn762.

Belongs to the glycosyl hydrolase 47 family. As to quaternary structure, interacts with PDI1. Ca(2+) serves as cofactor.

The protein resides in the endoplasmic reticulum lumen. It carries out the reaction Hydrolysis of terminal, non-reducing alpha-D-mannose residues in alpha-D-mannosides.. Its pathway is protein modification; protein glycosylation. Its function is as follows. Alpha-1,2-specific exomannosidase involved in endoplasmic reticulum-associated degradation (ERAD). Delivers misfolded glycoproteins to proteasomes. Forms a complex with PDI1 to process unfolded protein-bound Man8GlcNAc2 oligosaccharides to Man7GlcNAc2, promoting degradation in unfolded protein response. The chain is ER degradation-enhancing alpha-mannosidase-like protein 1 (MNL1) from Saccharomyces cerevisiae (strain ATCC 204508 / S288c) (Baker's yeast).